Consider the following 350-residue polypeptide: Uroporphyrinogen decarboxylase (350 aa).

Residues 28 to 32, Asp78, Tyr155, Ser210, and His325 contribute to the substrate site; that span reads RQAGR.

This sequence belongs to the uroporphyrinogen decarboxylase family. In terms of assembly, homodimer.

The protein localises to the cytoplasm. It catalyses the reaction uroporphyrinogen III + 4 H(+) = coproporphyrinogen III + 4 CO2. It participates in porphyrin-containing compound metabolism; protoporphyrin-IX biosynthesis; coproporphyrinogen-III from 5-aminolevulinate: step 4/4. Its function is as follows. Catalyzes the decarboxylation of four acetate groups of uroporphyrinogen-III to yield coproporphyrinogen-III. This Microcystis aeruginosa (strain NIES-843 / IAM M-2473) protein is Uroporphyrinogen decarboxylase.